The following is a 617-amino-acid chain: Vitamin B12 transporter BtuB (617 aa).

The N-terminal stretch at 1 to 22 (MRKTFLAITCASLLSPTFYSQA) is a signal peptide. The TonB box motif lies at 29-36 (ETVVVTAN). Residues 40-154 (QIDGAVLAQT…ISGVINIITR (115 aa)) form the TBDR plug domain. The TBDR beta-barrel domain occupies 159–617 (DDSGRVSAGY…QYFVSADYRF (459 aa)). The TonB C-terminal box signature appears at 600–617 (VGYVTPGRQYFVSADYRF).

This sequence belongs to the TonB-dependent receptor family. BtuB (TC 1.B.14.3.1) subfamily.

The protein resides in the cell outer membrane. Its function is as follows. Involved in the active translocation of vitamin B12 (cyanocobalamin) across the outer membrane to the periplasmic space. It derives its energy for transport by interacting with the trans-periplasmic membrane protein TonB. In Vibrio campbellii (strain ATCC BAA-1116), this protein is Vitamin B12 transporter BtuB.